We begin with the raw amino-acid sequence, 237 residues long: Ribonuclease PH (237 aa).

Phosphate is bound by residues Arg86 and 124–126; that span reads GTR.

The protein belongs to the RNase PH family. As to quaternary structure, homohexameric ring arranged as a trimer of dimers.

The catalysed reaction is tRNA(n+1) + phosphate = tRNA(n) + a ribonucleoside 5'-diphosphate. Its function is as follows. Phosphorolytic 3'-5' exoribonuclease that plays an important role in tRNA 3'-end maturation. Removes nucleotide residues following the 3'-CCA terminus of tRNAs; can also add nucleotides to the ends of RNA molecules by using nucleoside diphosphates as substrates, but this may not be physiologically important. Probably plays a role in initiation of 16S rRNA degradation (leading to ribosome degradation) during starvation. This is Ribonuclease PH from Methylorubrum populi (strain ATCC BAA-705 / NCIMB 13946 / BJ001) (Methylobacterium populi).